The following is a 481-amino-acid chain: 3-isopropylmalate dehydratase large subunit (481 aa).

C363, C423, and C426 together coordinate [4Fe-4S] cluster. The segment at 432–459 (DQLKPGERSASTSNRNFEGRQGPGGRTH) is disordered.

Belongs to the aconitase/IPM isomerase family. LeuC type 1 subfamily. As to quaternary structure, heterodimer of LeuC and LeuD. [4Fe-4S] cluster is required as a cofactor.

The catalysed reaction is (2R,3S)-3-isopropylmalate = (2S)-2-isopropylmalate. It participates in amino-acid biosynthesis; L-leucine biosynthesis; L-leucine from 3-methyl-2-oxobutanoate: step 2/4. Catalyzes the isomerization between 2-isopropylmalate and 3-isopropylmalate, via the formation of 2-isopropylmaleate. In Corynebacterium glutamicum (strain R), this protein is 3-isopropylmalate dehydratase large subunit.